Consider the following 469-residue polypeptide: 6-phospho-beta-galactosidase (469 aa).

D-galactose 6-phosphate is bound by residues Q19, H116, N159, E160, and N297. E160 serves as the catalytic Proton donor. The Nucleophile role is filled by E375. D-galactose 6-phosphate is bound by residues S428, W429, K435, and Y437.

This sequence belongs to the glycosyl hydrolase 1 family.

The enzyme catalyses a 6-phospho-beta-D-galactoside + H2O = D-galactose 6-phosphate + an alcohol. The protein operates within carbohydrate metabolism; lactose degradation; D-galactose 6-phosphate and beta-D-glucose from lactose 6-phosphate: step 1/1. This Streptococcus equi subsp. zooepidemicus (strain MGCS10565) protein is 6-phospho-beta-galactosidase.